The primary structure comprises 624 residues: Alpha-galactosidase 3 (624 aa).

An N-terminal signal peptide occupies residues 1–22; it reads MSPSAAVLIPLAAAVLLRPVVG. Asparagine 37, asparagine 56, asparagine 197, asparagine 259, and asparagine 293 each carry an N-linked (GlcNAc...) asparagine glycan. The Nucleophile role is filled by aspartate 347. An N-linked (GlcNAc...) asparagine glycan is attached at asparagine 393. Aspartate 412 functions as the Proton donor in the catalytic mechanism. N-linked (GlcNAc...) asparagine glycosylation occurs at asparagine 469.

Belongs to the glycosyl hydrolase 27 family.

It is found in the secreted. The enzyme catalyses Hydrolysis of terminal, non-reducing alpha-D-galactose residues in alpha-D-galactosides, including galactose oligosaccharides, galactomannans and galactolipids.. Alpha-galactosidase involved in the degradation of simple oligosaccharides like melibiose, raffinose and stachyose, and of polymeric galacto(gluco)mannans. The protein is Alpha-galactosidase 3 (agl3) of Hypocrea jecorina (Trichoderma reesei).